Consider the following 673-residue polypeptide: Putative transcription factor tau subunit sfc9 (673 aa).

May be a component of the TFIIIC complex.

The protein resides in the nucleus. This chain is Putative transcription factor tau subunit sfc9, found in Schizosaccharomyces pombe (strain 972 / ATCC 24843) (Fission yeast).